The primary structure comprises 306 residues: Pantothenate kinase (306 aa).

91-98 lines the ATP pocket; sequence GSVAVGKS.

This sequence belongs to the prokaryotic pantothenate kinase family.

The protein localises to the cytoplasm. It carries out the reaction (R)-pantothenate + ATP = (R)-4'-phosphopantothenate + ADP + H(+). Its pathway is cofactor biosynthesis; coenzyme A biosynthesis; CoA from (R)-pantothenate: step 1/5. The sequence is that of Pantothenate kinase from Streptococcus pneumoniae (strain JJA).